The primary structure comprises 536 residues: Protein ST7 homolog (536 aa).

2 helical membrane passes run 3-23 (CSWT…LFAL) and 49-69 (FYVA…IFEW). Residues 191-218 (LAEEESETVSQAENLLRRALRAIESTLN) adopt a coiled-coil conformation. The helical transmembrane segment at 465-485 (TLMMLLQTFICLAICILAVLA) threads the bilayer.

This sequence belongs to the ST7 family.

The protein localises to the membrane. The polypeptide is Protein ST7 homolog (Caenorhabditis elegans).